Here is a 193-residue protein sequence, read N- to C-terminus: Phosphoheptose isomerase (193 aa).

In terms of domain architecture, SIS spans 37-193; sequence LADSFKAGGK…QLIEKEMVKA (157 aa). A substrate-binding site is contributed by 52 to 54; it reads NGG. Residues H61 and E65 each contribute to the Zn(2+) site. Substrate contacts are provided by residues E65, 93–94, 119–121, S124, and Q172; these read ND and STS. Q172 and H180 together coordinate Zn(2+).

This sequence belongs to the SIS family. GmhA subfamily. As to quaternary structure, homotetramer. Requires Zn(2+) as cofactor.

The protein localises to the cytoplasm. It carries out the reaction 2 D-sedoheptulose 7-phosphate = D-glycero-alpha-D-manno-heptose 7-phosphate + D-glycero-beta-D-manno-heptose 7-phosphate. It participates in carbohydrate biosynthesis; D-glycero-D-manno-heptose 7-phosphate biosynthesis; D-glycero-alpha-D-manno-heptose 7-phosphate and D-glycero-beta-D-manno-heptose 7-phosphate from sedoheptulose 7-phosphate: step 1/1. Its function is as follows. Catalyzes the isomerization of sedoheptulose 7-phosphate in D-glycero-D-manno-heptose 7-phosphate. The sequence is that of Phosphoheptose isomerase from Serratia proteamaculans (strain 568).